Consider the following 341-residue polypeptide: Glyceraldehyde-3-phosphate dehydrogenase (341 aa).

Residues 11–12 and Gly110 contribute to the NAD(+) site; that span reads TI. Residue 139 to 141 coordinates D-glyceraldehyde 3-phosphate; it reads SCN. Catalysis depends on Cys140, which acts as the Nucleophile. An NAD(+)-binding site is contributed by Arg168. Position 194–195 (194–195) interacts with D-glyceraldehyde 3-phosphate; sequence HG. Gln302 is an NAD(+) binding site.

It belongs to the glyceraldehyde-3-phosphate dehydrogenase family. In terms of assembly, homotetramer.

It localises to the cytoplasm. The catalysed reaction is D-glyceraldehyde 3-phosphate + phosphate + NADP(+) = (2R)-3-phospho-glyceroyl phosphate + NADPH + H(+). It carries out the reaction D-glyceraldehyde 3-phosphate + phosphate + NAD(+) = (2R)-3-phospho-glyceroyl phosphate + NADH + H(+). The protein operates within carbohydrate degradation; glycolysis; pyruvate from D-glyceraldehyde 3-phosphate: step 1/5. This Methanoculleus marisnigri (strain ATCC 35101 / DSM 1498 / JR1) protein is Glyceraldehyde-3-phosphate dehydrogenase.